The sequence spans 311 residues: tRNA (cytosine(49)-C(5))-methyltransferase (311 aa).

Residues 118-124 (AAAPGSK), D142, D169, and D186 each bind S-adenosyl-L-methionine. The Nucleophile role is filled by C239.

The protein belongs to the class I-like SAM-binding methyltransferase superfamily. RsmB/NOP family. As to quaternary structure, forms a tripartite complex with archease and tRNA. Binds only the oligomeric forms of the archease.

It is found in the cytoplasm. The enzyme catalyses cytidine(49) in tRNA precursor + S-adenosyl-L-methionine = 5-methylcytidine(49) in tRNA precursor + S-adenosyl-L-homocysteine + H(+). With respect to regulation, substrate specificity and tendency to aggregate are influenced by archease. In terms of biological role, catalyzes AdoMet-dependent formation of m5C in tRNA. In the presence of protein archease, specifically methylates the cytosine at position 49 (m5C49) of tRNA. In the absence of archease, catalyzes the formation of m5C at many locations in tRNAs or rRNAs. This is tRNA (cytosine(49)-C(5))-methyltransferase from Pyrococcus abyssi (strain GE5 / Orsay).